The chain runs to 585 residues: Sodium/calcium exchanger NCL (585 aa).

5 helical membrane passes run 83–103 (VFLI…LSAG), 106–126 (LLLE…MLGA), 149–169 (VSVG…VIWG), 212–232 (IMAI…LGST), and 239–259 (VLIA…YQVF). 2 EF-hand domains span residues 299-334 (PDEH…ISFE) and 339-374 (DKDD…WLIQ). Residues aspartate 312, asparagine 314, aspartate 316, histidine 318, glutamate 323, aspartate 352, aspartate 356, glutamine 358, and glutamate 363 each contribute to the Ca(2+) site. Transmembrane regions (helical) follow at residues 427-447 (WITI…AAFA) and 457-477 (FSAA…PLAT). Residue asparagine 478 is glycosylated (N-linked (GlcNAc...) asparagine). 3 consecutive transmembrane segments (helical) span residues 505 to 525 (CGGV…IVYV), 532 to 552 (FSSE…FASF), and 558 to 578 (LWTC…VYIL).

This sequence belongs to the Ca(2+):cation antiporter (CaCA) (TC 2.A.19) family. In terms of tissue distribution, expressed in roots, leaves, stems, petals, stamens, ovules and siliques.

It localises to the cell membrane. Its subcellular location is the vacuole membrane. Possesses sodium/calcium exchanger (NCX) activity when expressed in a heterologous mammalian CHO-K1 cell system. Does not possess cation/proton exchanger (CAX) or sodium/proton (NHX) activity when expressed in a heterologous yeast cell system. Has the ability to bind calcium in vitro. Participates in the maintenance of calcium homeostasis. May play a role in auxin response, diurnal rhythm and flowering time. Involved in salt stress response. This chain is Sodium/calcium exchanger NCL, found in Arabidopsis thaliana (Mouse-ear cress).